Here is a 107-residue protein sequence, read N- to C-terminus: Translation initiation factor IF-1, chloroplastic (107 aa).

The S1-like domain maps to 8–83 (REKKNPREAK…SKGRIIYRLP (76 aa)).

This sequence belongs to the IF-1 family. As to quaternary structure, component of the 30S ribosomal translation pre-initiation complex which assembles on the 30S ribosome in the order IF-2 and IF-3, IF-1 and N-formylmethionyl-tRNA(fMet); mRNA recruitment can occur at any time during PIC assembly.

It localises to the plastid. The protein resides in the chloroplast. Its function is as follows. One of the essential components for the initiation of protein synthesis. Stabilizes the binding of IF-2 and IF-3 on the 30S subunit to which N-formylmethionyl-tRNA(fMet) subsequently binds. Helps modulate mRNA selection, yielding the 30S pre-initiation complex (PIC). Upon addition of the 50S ribosomal subunit IF-1, IF-2 and IF-3 are released leaving the mature 70S translation initiation complex. The protein is Translation initiation factor IF-1, chloroplastic of Lolium perenne (Perennial ryegrass).